Reading from the N-terminus, the 73-residue chain is Large ribosomal subunit protein bL31 (73 aa).

Zn(2+) is bound by residues Cys-16, Cys-18, Cys-38, and Cys-41.

It belongs to the bacterial ribosomal protein bL31 family. Type A subfamily. As to quaternary structure, part of the 50S ribosomal subunit. Zn(2+) is required as a cofactor.

In terms of biological role, binds the 23S rRNA. The sequence is that of Large ribosomal subunit protein bL31 from Vibrio parahaemolyticus serotype O3:K6 (strain RIMD 2210633).